The following is an 81-amino-acid chain: Small ribosomal subunit protein eS21 (81 aa).

This sequence belongs to the eukaryotic ribosomal protein eS21 family. As to quaternary structure, component of the 40S small ribosomal subunit.

It is found in the cytoplasm. The protein resides in the cytosol. The protein localises to the rough endoplasmic reticulum. Functionally, component of the small ribosomal subunit. The ribosome is a large ribonucleoprotein complex responsible for the synthesis of proteins in the cell. The chain is Small ribosomal subunit protein eS21 (rps21) from Danio rerio (Zebrafish).